Consider the following 185-residue polypeptide: uncharacterized protein (185 aa).

This is an uncharacterized protein from Alkalihalophilus pseudofirmus (strain ATCC BAA-2126 / JCM 17055 / OF4) (Bacillus pseudofirmus).